The chain runs to 236 residues: Sensory rhodopsin I (236 aa).

7 helical membrane passes run 6–26 (VVYG…GFLY), 37–57 (ILAA…AMVF), 74–94 (YLDW…TAGA), 98–118 (AIFG…GAVV), 126–146 (ALFG…YLIF), 167–187 (VGLL…GLGF), and 192–212 (GVSI…VYFF). Lysine 205 carries the N6-(retinylidene)lysine modification.

It belongs to the archaeal/bacterial/fungal opsin family. In terms of assembly, interacts with Htr1. Post-translationally, the covalent binding of retinal to the apoprotein, bacterioopsin, generates bacteriorhodopsin.

It is found in the membrane. Photoattractant rhodopsin. The polypeptide is Sensory rhodopsin I (sop1) (Haloarcula marismortui (strain ATCC 43049 / DSM 3752 / JCM 8966 / VKM B-1809) (Halobacterium marismortui)).